The primary structure comprises 361 residues: Lipoyl synthase 1, chloroplastic (361 aa).

7 residues coordinate [4Fe-4S] cluster: Cys-87, Cys-92, Cys-98, Cys-124, Cys-128, Cys-131, and Ser-339. The Radical SAM core domain maps to 107-328; the sequence is GEGDGIATAT…KEYGESVGFR (222 aa).

It belongs to the radical SAM superfamily. Lipoyl synthase family. It depends on [4Fe-4S] cluster as a cofactor.

The protein localises to the plastid. Its subcellular location is the chloroplast. The catalysed reaction is [[Fe-S] cluster scaffold protein carrying a second [4Fe-4S](2+) cluster] + N(6)-octanoyl-L-lysyl-[protein] + 2 oxidized [2Fe-2S]-[ferredoxin] + 2 S-adenosyl-L-methionine + 4 H(+) = [[Fe-S] cluster scaffold protein] + N(6)-[(R)-dihydrolipoyl]-L-lysyl-[protein] + 4 Fe(3+) + 2 hydrogen sulfide + 2 5'-deoxyadenosine + 2 L-methionine + 2 reduced [2Fe-2S]-[ferredoxin]. It participates in protein modification; protein lipoylation via endogenous pathway; protein N(6)-(lipoyl)lysine from octanoyl-[acyl-carrier-protein]: step 2/2. Catalyzes the radical-mediated insertion of two sulfur atoms into the C-6 and C-8 positions of the octanoyl moiety bound to the lipoyl domains of lipoate-dependent enzymes, thereby converting the octanoylated domains into lipoylated derivatives. The sequence is that of Lipoyl synthase 1, chloroplastic from Zea mays (Maize).